A 199-amino-acid polypeptide reads, in one-letter code: Charged multivesicular body protein 1b (199 aa).

2 coiled-coil regions span residues 10–48 (NLKF…MEVA) and 178–199 (TSVA…RDQV). Residues 167–199 (ELPQGQTGSVGTSVASAEQDELSQRLARLRDQV) form a disordered region. A compositionally biased stretch (polar residues) spans 170-182 (QGQTGSVGTSVAS). The MIT-interacting motif motif lies at 186–196 (DELSQRLARLR).

Belongs to the SNF7 family. As to quaternary structure, probable peripherally associated component of the endosomal sorting required for transport complex III (ESCRT-III).

The protein localises to the cytoplasm. Its subcellular location is the cytosol. The protein resides in the endosome. It localises to the late endosome membrane. Its function is as follows. Probable peripherally associated component of the endosomal sorting required for transport complex III (ESCRT-III) which is involved in multivesicular bodies (MVBs) formation and sorting of endosomal cargo proteins into MVBs. MVBs contain intraluminal vesicles (ILVs) that are generated by invagination and scission from the limiting membrane of the endosome and mostly are delivered to lysosomes enabling degradation of membrane proteins, such as stimulated growth factor receptors, lysosomal enzymes and lipids. The polypeptide is Charged multivesicular body protein 1b (CHMP1B) (Gallus gallus (Chicken)).